The following is a 767-amino-acid chain: ATPase family gene 2 protein homolog B (767 aa).

M1 is modified (N-acetylmethionine). Residues 241–248 (GPPGVGKT) and 507–514 (GPPGCAKT) contribute to the ATP site.

The protein belongs to the AAA ATPase family. AFG2 subfamily. As to quaternary structure, part of the 55LCC heterohexameric ATPase complex composed at least of AIRIM, AFG2A, AFG2B and CINP. Associates with pre-60S ribosomal particles.

It localises to the cytoplasm. The protein localises to the cytoskeleton. The protein resides in the spindle. Its subcellular location is the nucleus. It carries out the reaction ATP + H2O = ADP + phosphate + H(+). In the context of 55LCC heterohexameric ATPase complex, the ATPase activity is stimulated by DNA binding and inhibited in presence of RNA. Functionally, ATP-dependent chaperone part of the 55LCC heterohexameric ATPase complex which is chromatin-associated and promotes replisome proteostasis to maintain replication fork progression and genome stability. Required for replication fork progression, sister chromatid cohesion, and chromosome stability. The ATPase activity is specifically enhanced by replication fork DNA and is coupled to cysteine protease-dependent cleavage of replisome substrates in response to replication fork damage. Uses ATPase activity to process replisome substrates in S-phase, facilitating their proteolytic turnover from chromatin to ensure DNA replication and mitotic fidelity. Plays an essential role in the cytoplasmic maturation steps of pre-60S ribosomal particles by promoting the release of shuttling protein RSL24D1/RLP24 from the pre-ribosomal particles. This chain is ATPase family gene 2 protein homolog B (AFG2B), found in Bos taurus (Bovine).